Here is a 719-residue protein sequence, read N- to C-terminus: DNA replication licensing factor MCM7 (719 aa).

Ala-2 carries the N-acetylalanine modification. Glycyl lysine isopeptide (Lys-Gly) (interchain with G-Cter in SUMO2) cross-links involve residues Lys-15 and Lys-28. Phosphoserine occurs at positions 121 and 314. The region spanning 332 to 538 is the MCM domain; it reads FYEKLAASIA…NDLRLAQHIT (207 aa). Tyr-345 contributes to the ATP binding site. The residue at position 365 (Ser-365) is a Phosphoserine. 5 residues coordinate ATP: Gly-384, Ala-386, Lys-387, Ser-388, and Asn-489. Residue Ser-500 is modified to Phosphoserine. The Arginine finger motif lies at 513 to 516; sequence SRFD. Arg-514 contacts ATP. The interval 521-564 is interaction with RAD17; sequence IQDRPDRDNDLRLAQHITYVHQHSRQPPAQFEPLDMKLMRRYIA. Positions 577–719 are interaction with ATRIP; it reads LADYITAAYV…NTARTRITFV (143 aa). An ATP-binding site is contributed by Arg-604. Ser-678 is subject to Phosphoserine.

This sequence belongs to the MCM family. As to quaternary structure, component of the MCM2-7 complex. The complex forms a toroidal hexameric ring with the proposed subunit order MCM2-MCM6-MCM4-MCM7-MCM3-MCM5. Component of the CMG helicase complex, a hexameric ring of related MCM2-7 subunits stabilized by CDC45 and the tetrameric GINS complex. Interacts with the ATR-ATRIP complex and with RAD17. Interacts with TIPIN. Interacts with MCMBP. Interacts with ANKRD17. Component of the replisome complex composed of at least DONSON, MCM2, MCM7, PCNA and TICRR. In terms of processing, O-glycosylated (O-GlcNAcylated), in a cell cycle-dependent manner. Ubiquitinated by ECS(LRR1) E3 ubiquitin-protein ligase complex when forks converge following formation of DNA interstrand cross-links. During mitosis, ubiquitinated by TRAIP when forks converge following formation of DNA interstrand cross-links. Short ubiquitin chains on MCM7 promote recruitment of DNA glycosylase NEIL3. If the interstrand cross-link cannot be cleaved by NEIL3, the ubiquitin chains continue to grow on MCM7, promoting the unloading of the CMG helicase complex by the VCP/p97 ATPase.

The protein localises to the nucleus. Its subcellular location is the chromosome. It carries out the reaction ATP + H2O = ADP + phosphate + H(+). Functionally, acts as a component of the MCM2-7 complex (MCM complex) which is the replicative helicase essential for 'once per cell cycle' DNA replication initiation and elongation in eukaryotic cells. Core component of CDC45-MCM-GINS (CMG) helicase, the molecular machine that unwinds template DNA during replication, and around which the replisome is built. The active ATPase sites in the MCM2-7 ring are formed through the interaction surfaces of two neighboring subunits such that a critical structure of a conserved arginine finger motif is provided in trans relative to the ATP-binding site of the Walker A box of the adjacent subunit. The six ATPase active sites, however, are likely to contribute differentially to the complex helicase activity. Required for S-phase checkpoint activation upon UV-induced damage. The protein is DNA replication licensing factor MCM7 (MCM7) of Bos taurus (Bovine).